The sequence spans 230 residues: Ion-translocating oxidoreductase complex subunit E (230 aa).

The next 6 membrane-spanning stretches (helical) occupy residues 18–38 (ALVQLLGLCPLLAVSSTITNA), 39–59 (LGLGIATLLVLVGSNVTVSLI), 69–89 (IPVFVMIIASLVTCVQLLMNA), 93–113 (GLYLSLGIFIPLIVTNCIIIG), 124–144 (VLPAALDGLWMGLGMTSVLVV), and 182–202 (SFLLALLPPGAFIGVGLLIAL).

This sequence belongs to the NqrDE/RnfAE family. The complex is composed of six subunits: RnfA, RnfB, RnfC, RnfD, RnfE and RnfG.

The protein resides in the cell inner membrane. Its function is as follows. Part of a membrane-bound complex that couples electron transfer with translocation of ions across the membrane. The chain is Ion-translocating oxidoreductase complex subunit E from Vibrio parahaemolyticus serotype O3:K6 (strain RIMD 2210633).